A 488-amino-acid polypeptide reads, in one-letter code: Protein nucleotidyltransferase YdiU (488 aa).

ATP is bound by residues G90, G92, R93, K113, D125, G126, R176, and R183. D252 (proton acceptor) is an active-site residue. Mg(2+)-binding residues include N253 and D262. D262 contacts ATP.

It belongs to the SELO family. It depends on Mg(2+) as a cofactor. The cofactor is Mn(2+).

The catalysed reaction is L-seryl-[protein] + ATP = 3-O-(5'-adenylyl)-L-seryl-[protein] + diphosphate. The enzyme catalyses L-threonyl-[protein] + ATP = 3-O-(5'-adenylyl)-L-threonyl-[protein] + diphosphate. It carries out the reaction L-tyrosyl-[protein] + ATP = O-(5'-adenylyl)-L-tyrosyl-[protein] + diphosphate. It catalyses the reaction L-histidyl-[protein] + UTP = N(tele)-(5'-uridylyl)-L-histidyl-[protein] + diphosphate. The catalysed reaction is L-seryl-[protein] + UTP = O-(5'-uridylyl)-L-seryl-[protein] + diphosphate. The enzyme catalyses L-tyrosyl-[protein] + UTP = O-(5'-uridylyl)-L-tyrosyl-[protein] + diphosphate. In terms of biological role, nucleotidyltransferase involved in the post-translational modification of proteins. It can catalyze the addition of adenosine monophosphate (AMP) or uridine monophosphate (UMP) to a protein, resulting in modifications known as AMPylation and UMPylation. The protein is Protein nucleotidyltransferase YdiU of Thiobacillus denitrificans (strain ATCC 25259 / T1).